A 579-amino-acid chain; its full sequence is 2-succinyl-5-enolpyruvyl-6-hydroxy-3-cyclohexene-1-carboxylate synthase (579 aa).

The protein belongs to the TPP enzyme family. MenD subfamily. Homodimer. The cofactor is Mg(2+). It depends on Mn(2+) as a cofactor. Thiamine diphosphate is required as a cofactor.

The catalysed reaction is isochorismate + 2-oxoglutarate + H(+) = 5-enolpyruvoyl-6-hydroxy-2-succinyl-cyclohex-3-ene-1-carboxylate + CO2. The protein operates within quinol/quinone metabolism; 1,4-dihydroxy-2-naphthoate biosynthesis; 1,4-dihydroxy-2-naphthoate from chorismate: step 2/7. It participates in quinol/quinone metabolism; menaquinone biosynthesis. In terms of biological role, catalyzes the thiamine diphosphate-dependent decarboxylation of 2-oxoglutarate and the subsequent addition of the resulting succinic semialdehyde-thiamine pyrophosphate anion to isochorismate to yield 2-succinyl-5-enolpyruvyl-6-hydroxy-3-cyclohexene-1-carboxylate (SEPHCHC). The chain is 2-succinyl-5-enolpyruvyl-6-hydroxy-3-cyclohexene-1-carboxylate synthase from Oceanobacillus iheyensis (strain DSM 14371 / CIP 107618 / JCM 11309 / KCTC 3954 / HTE831).